The following is a 194-amino-acid chain: Ion-translocating oxidoreductase complex subunit A (194 aa).

6 helical membrane-spanning segments follow: residues 4–24 (LVLI…QFLG), 39–59 (IGLA…SYLL), 72–92 (LRTI…EMLV), 102–122 (VLGI…VALL), 135–155 (GING…FAAM), and 172–192 (AIGL…SGLI).

The protein belongs to the NqrDE/RnfAE family. In terms of assembly, the complex is composed of six subunits: RnfA, RnfB, RnfC, RnfD, RnfE and RnfG.

The protein localises to the cell inner membrane. Part of a membrane-bound complex that couples electron transfer with translocation of ions across the membrane. This chain is Ion-translocating oxidoreductase complex subunit A, found in Azotobacter vinelandii (strain DJ / ATCC BAA-1303).